Here is a 510-residue protein sequence, read N- to C-terminus: Bifunctional purine biosynthesis protein PurH (510 aa).

The MGS-like domain occupies M1 to V144.

Belongs to the PurH family.

It carries out the reaction (6R)-10-formyltetrahydrofolate + 5-amino-1-(5-phospho-beta-D-ribosyl)imidazole-4-carboxamide = 5-formamido-1-(5-phospho-D-ribosyl)imidazole-4-carboxamide + (6S)-5,6,7,8-tetrahydrofolate. The catalysed reaction is IMP + H2O = 5-formamido-1-(5-phospho-D-ribosyl)imidazole-4-carboxamide. It participates in purine metabolism; IMP biosynthesis via de novo pathway; 5-formamido-1-(5-phospho-D-ribosyl)imidazole-4-carboxamide from 5-amino-1-(5-phospho-D-ribosyl)imidazole-4-carboxamide (10-formyl THF route): step 1/1. It functions in the pathway purine metabolism; IMP biosynthesis via de novo pathway; IMP from 5-formamido-1-(5-phospho-D-ribosyl)imidazole-4-carboxamide: step 1/1. This Clostridioides difficile (strain 630) (Peptoclostridium difficile) protein is Bifunctional purine biosynthesis protein PurH.